A 263-amino-acid chain; its full sequence is Endonuclease 8 (263 aa).

The Schiff-base intermediate with DNA role is filled by proline 2. The active-site Proton donor is the glutamate 3. The active-site Proton donor; for beta-elimination activity is the lysine 53. Residues glutamine 70, arginine 125, and asparagine 169 each contribute to the DNA site. The FPG-type zinc finger occupies 229–263; it reads KVFHRDGEACERCGGIIEKTTLSSRPFYWCPHCQK. The active-site Proton donor; for delta-elimination activity is arginine 253.

It belongs to the FPG family. Zn(2+) serves as cofactor.

It carries out the reaction 2'-deoxyribonucleotide-(2'-deoxyribose 5'-phosphate)-2'-deoxyribonucleotide-DNA = a 3'-end 2'-deoxyribonucleotide-(2,3-dehydro-2,3-deoxyribose 5'-phosphate)-DNA + a 5'-end 5'-phospho-2'-deoxyribonucleoside-DNA + H(+). Involved in base excision repair of DNA damaged by oxidation or by mutagenic agents. Acts as a DNA glycosylase that recognizes and removes damaged bases. Has a preference for oxidized pyrimidines, such as thymine glycol, 5,6-dihydrouracil and 5,6-dihydrothymine. Has AP (apurinic/apyrimidinic) lyase activity and introduces nicks in the DNA strand. Cleaves the DNA backbone by beta-delta elimination to generate a single-strand break at the site of the removed base with both 3'- and 5'-phosphates. The sequence is that of Endonuclease 8 from Salmonella paratyphi B (strain ATCC BAA-1250 / SPB7).